Reading from the N-terminus, the 267-residue chain is Acyl-[acyl-carrier-protein]--UDP-N-acetylglucosamine O-acyltransferase (267 aa).

Belongs to the transferase hexapeptide repeat family. LpxA subfamily. In terms of assembly, homotrimer.

The protein localises to the cytoplasm. The catalysed reaction is a (3R)-hydroxyacyl-[ACP] + UDP-N-acetyl-alpha-D-glucosamine = a UDP-3-O-[(3R)-3-hydroxyacyl]-N-acetyl-alpha-D-glucosamine + holo-[ACP]. It participates in glycolipid biosynthesis; lipid IV(A) biosynthesis; lipid IV(A) from (3R)-3-hydroxytetradecanoyl-[acyl-carrier-protein] and UDP-N-acetyl-alpha-D-glucosamine: step 1/6. In terms of biological role, involved in the biosynthesis of lipid A, a phosphorylated glycolipid that anchors the lipopolysaccharide to the outer membrane of the cell. The polypeptide is Acyl-[acyl-carrier-protein]--UDP-N-acetylglucosamine O-acyltransferase (Cupriavidus pinatubonensis (strain JMP 134 / LMG 1197) (Cupriavidus necator (strain JMP 134))).